A 495-amino-acid chain; its full sequence is uncharacterized protein (495 aa).

A TRAM domain is found at 16-74; it reads SSKRGDLIELAVTALDEDGNGIGTHDGTNVHVIGALPDERVRARLTHVGKRHLHAEAVE. Residues Cys-88, Cys-94, Cys-97, and Cys-175 each contribute to the [4Fe-4S] cluster site. S-adenosyl-L-methionine-binding residues include Gln-299, Tyr-328, Glu-349, and Asn-397. Residue Cys-424 is the Nucleophile of the active site. Residues 472–483 are compositionally biased toward basic and acidic residues; it reads DRLESPAKERSR. The tract at residues 472–495 is disordered; that stretch reads DRLESPAKERSRPRASHKAKGGAV. Residues 484–495 are compositionally biased toward basic residues; it reads PRASHKAKGGAV.

Belongs to the class I-like SAM-binding methyltransferase superfamily. RNA M5U methyltransferase family.

This is an uncharacterized protein from Geobacter sulfurreducens (strain ATCC 51573 / DSM 12127 / PCA).